Reading from the N-terminus, the 877-residue chain is MEKLGMNEIREKFLSFFESKGHLRLPSFSLIPKNDKSLLLINSGMAPLKPYFTGKETPPSKRVTTCQRCIRTPDIERVGKTARHGTFFEMLGNFSFGDYFKKEAIPWAWEFVTEVLGLPVNRLWVSIYEEDDEAFEIWNKIVGLPPERIVRMGKEDNFWEIGTGPCGPSSEIYFDRGEEKGCGKPTCGVGCDCDRFIEFWNLVFTQFNKDEQGNYHRLPNPNIDTGMGLERIATIMQGVDSIFDVDVIRGITNFVSQIAEVEYGKDAEKDVSLRVITDHIRGITFMISDGILPSNEGRGYVLRRLLRRAARHGKLLGINDTFLYRVVDSVVENYGEAYPEIIDRKDYIKRIVKLEEERFKETIDQGLTILQDYINELKVQGKTVLEGSKAFKLYDTYGFPLDLTKEILQEAGITVDEEGYTKELEKQRIRARSSRKEDNSLWEQDIYSTLGDIKTKFVGYDTYESNSKVLAIVKDEELVEEAEAGDDVSIILDVTPFYAESGGQIGDNGILENENVLIKVKDCKKVGDRFIHIGTIERGLISVRDEVKAQIDVVSRRNAARNHTATHLLHKALKEILGDHVHQAGSLVADDRLRFDFSHYQAVTKEELKQIENRVNEKIYQSLNVHIEEKTYDEAVKEGAVALFTEKYGDKVRVVKIDDYSMELCGGTHVKNTNEIGIFKIVSESAVGAGLRRIEALTGLAAIKYLEEKEEILKEASDLLKAQDKEIVSKIESLQQVLKTKDKEIEQLKIKMASILANSLINSAISLDGIKVVVSKVEDYDSEALKALGDILKDKLKTAAIVLASSTPEKAIFVGMATKDVVQKGINMGAVIKEVCKVSEGNGGGRPDMAQGTGKNPSKVEEALNKAIDIVKEQLKN.

4 residues coordinate Zn(2+): His-563, His-567, Cys-665, and His-669.

The protein belongs to the class-II aminoacyl-tRNA synthetase family. The cofactor is Zn(2+).

It localises to the cytoplasm. It catalyses the reaction tRNA(Ala) + L-alanine + ATP = L-alanyl-tRNA(Ala) + AMP + diphosphate. In terms of biological role, catalyzes the attachment of alanine to tRNA(Ala) in a two-step reaction: alanine is first activated by ATP to form Ala-AMP and then transferred to the acceptor end of tRNA(Ala). Also edits incorrectly charged Ser-tRNA(Ala) and Gly-tRNA(Ala) via its editing domain. The sequence is that of Alanine--tRNA ligase from Thermoanaerobacter pseudethanolicus (strain ATCC 33223 / 39E) (Clostridium thermohydrosulfuricum).